The primary structure comprises 221 residues: Glutathione S-transferase 1 (221 aa).

The GST N-terminal domain maps to 7–88 (QKMQLYSFSL…YLEEKFPENP (82 aa)). Residues 17-22 (SSCAWR), Val-60, 72-73 (DS), Gln-112, and 116-118 (NLA) contribute to the glutathione site. A GST C-terminal domain is found at 93–221 (DLQKRALNYQ…ISPMLDEAKS (129 aa)).

Belongs to the GST superfamily. Zeta family.

The catalysed reaction is RX + glutathione = an S-substituted glutathione + a halide anion + H(+). Conjugation of reduced glutathione to a wide number of exogenous and endogenous hydrophobic electrophiles. This chain is Glutathione S-transferase 1 (GST1), found in Dianthus caryophyllus (Carnation).